We begin with the raw amino-acid sequence, 79 residues long: Secretory calcium-binding phosphoprotein proline-glutamine rich 1 (79 aa).

Residues 1–15 (MKFLILAGLLSTATA) form the signal peptide.

It is found in the secreted. Its function is as follows. Tooth-associated epithelia protein that may participate in structuring the basal lamina at cell-tooth interface. The protein is Secretory calcium-binding phosphoprotein proline-glutamine rich 1 of Homo sapiens (Human).